A 270-amino-acid chain; its full sequence is Diaminopimelate epimerase (270 aa).

Substrate contacts are provided by asparagine 15, glutamine 49, and asparagine 66. Cysteine 75 functions as the Proton donor in the catalytic mechanism. Substrate-binding positions include 76-77 (GN), asparagine 155, asparagine 187, and 204-205 (ER). Cysteine 213 serves as the catalytic Proton acceptor. A substrate-binding site is contributed by 214-215 (GS).

This sequence belongs to the diaminopimelate epimerase family. As to quaternary structure, homodimer.

The protein localises to the cytoplasm. It catalyses the reaction (2S,6S)-2,6-diaminopimelate = meso-2,6-diaminopimelate. The protein operates within amino-acid biosynthesis; L-lysine biosynthesis via DAP pathway; DL-2,6-diaminopimelate from LL-2,6-diaminopimelate: step 1/1. In terms of biological role, catalyzes the stereoinversion of LL-2,6-diaminopimelate (L,L-DAP) to meso-diaminopimelate (meso-DAP), a precursor of L-lysine and an essential component of the bacterial peptidoglycan. The chain is Diaminopimelate epimerase from Rickettsia rickettsii (strain Iowa).